The sequence spans 79 residues: Small integral membrane protein 40 (79 aa).

Residues 35–55 form a helical membrane-spanning segment; sequence FFIFLALFLTLLMLEAAYKLL.

The protein resides in the membrane. The chain is Small integral membrane protein 40 from Homo sapiens (Human).